The following is a 117-amino-acid chain: Ribosome maturation factor RimP (117 aa).

This sequence belongs to the RimP family.

It localises to the cytoplasm. Required for maturation of 30S ribosomal subunits. The chain is Ribosome maturation factor RimP from Rickettsia prowazekii (strain Madrid E).